Reading from the N-terminus, the 377-residue chain is Peptide chain release factor 2 (377 aa).

The residue at position 257 (Gln-257) is an N5-methylglutamine.

This sequence belongs to the prokaryotic/mitochondrial release factor family. Post-translationally, methylated by PrmC. Methylation increases the termination efficiency of RF2.

It is found in the cytoplasm. Its function is as follows. Peptide chain release factor 2 directs the termination of translation in response to the peptide chain termination codons UGA and UAA. In Lactiplantibacillus plantarum (strain ATCC BAA-793 / NCIMB 8826 / WCFS1) (Lactobacillus plantarum), this protein is Peptide chain release factor 2.